Here is a 114-residue protein sequence, read N- to C-terminus: MEIAGKIACFVVLCMVVAAPCAEAITCGQVTSNLAPCLAYLRNTGPLGRCCGGVKALVNSARTTEDRQIACTCLKSAAGAISGINLGKAAGLPSTCGVNIPYKISPSTDCSKVQ.

The first 23 residues, 1–23, serve as a signal peptide directing secretion; the sequence is MEIAGKIACFVVLCMVVAAPCAE. 4 cysteine pairs are disulfide-bonded: Cys-27–Cys-73, Cys-37–Cys-50, Cys-51–Cys-96, and Cys-71–Cys-110.

Belongs to the plant LTP family. In terms of tissue distribution, high expression in leaf epidermis and shoot apex, and also in root epidermis during seedling germination.

Functionally, plant non-specific lipid-transfer proteins transfer phospholipids as well as galactolipids across membranes. Binds cis-unsaturated fatty acids and jasmonic acid with a higher affinity than linear chain fatty acids. Formation of the complex with jasmonic acid results in a conformational change facilitating the LPT1 binding on the elicitin plasma membrane receptor that is known to be involved in plant defense induction. May also play a role in wax or cutin deposition in the cell walls of expanding epidermal cells and certain secretory tissues. The chain is Non-specific lipid-transfer protein 1 (LTP1) from Nicotiana tabacum (Common tobacco).